A 270-amino-acid chain; its full sequence is Acyl-[acyl-carrier-protein]--UDP-N-acetylglucosamine O-acyltransferase (270 aa).

It belongs to the transferase hexapeptide repeat family. LpxA subfamily. In terms of assembly, homotrimer.

It localises to the cytoplasm. It catalyses the reaction a (3R)-hydroxyacyl-[ACP] + UDP-N-acetyl-alpha-D-glucosamine = a UDP-3-O-[(3R)-3-hydroxyacyl]-N-acetyl-alpha-D-glucosamine + holo-[ACP]. It participates in glycolipid biosynthesis; lipid IV(A) biosynthesis; lipid IV(A) from (3R)-3-hydroxytetradecanoyl-[acyl-carrier-protein] and UDP-N-acetyl-alpha-D-glucosamine: step 1/6. In terms of biological role, involved in the biosynthesis of lipid A, a phosphorylated glycolipid that anchors the lipopolysaccharide to the outer membrane of the cell. This is Acyl-[acyl-carrier-protein]--UDP-N-acetylglucosamine O-acyltransferase from Bartonella tribocorum (strain CIP 105476 / IBS 506).